A 270-amino-acid chain; its full sequence is MAVGVFDSGLGGLTVLDAVQRRLPEVPFVYFGDNAHAPYGVRDADDIFALTCAATERLWAEGCDLVILACNTASAAALKRMQESWIPRDKRVLGVFVPLIEALTERQWGDNSPPREVAVKHVALFATPATVASRAFQRELAFRAIGVDVEAQPCGGVVDAIEQGDEILAEALVRSHVEALKRRMPHPQAAILGCTHYPLMEATFQEALGPEVTVYSQANLVAESLADYLARRPEFVGQGTESKFLTTGDPRSVSNKATQFLRRRITFEAA.

Substrate is bound by residues 7 to 8 (DS) and 39 to 40 (YG). C70 (proton donor/acceptor) is an active-site residue. 71-72 (NT) contacts substrate. C194 (proton donor/acceptor) is an active-site residue. Substrate is bound at residue 195–196 (TH).

Belongs to the aspartate/glutamate racemases family.

The catalysed reaction is L-glutamate = D-glutamate. Its pathway is cell wall biogenesis; peptidoglycan biosynthesis. In terms of biological role, provides the (R)-glutamate required for cell wall biosynthesis. In Cereibacter sphaeroides (strain ATCC 17025 / ATH 2.4.3) (Rhodobacter sphaeroides), this protein is Glutamate racemase.